The sequence spans 1190 residues: Tight junction protein 2 (1190 aa).

Ser-16 is modified (phosphoserine). Residues 33 to 120 (TVTLQKDSKR…VAAIVVKRPR (88 aa)) enclose the PDZ 1 domain. Ser-130, Ser-150, Ser-153, Ser-163, Ser-168, Ser-170, Ser-174, Ser-200, Ser-220, Ser-232, Ser-244, Ser-266, Ser-325, Ser-398, Ser-400, Ser-406, Ser-415, Ser-424, Ser-430, and Ser-431 each carry phosphoserine. Residues 152-306 (RSGYSERSRL…PEPRGRPGPI (155 aa)) are disordered. Residues 169–291 (RSWEDSPERG…PRSRSREHPH (123 aa)) are compositionally biased toward basic and acidic residues. One can recognise a PDZ 2 domain in the interval 307 to 385 (GVLLMKSRAN…KLQLVVLRDS (79 aa)). Positions 408-506 (IESNRSFSPE…RPSPEDEAIY (99 aa)) are disordered. The segment covering 415-446 (SPEERRHQYSDYDYHSSSEKLKERPSSREDTP) has biased composition (basic and acidic residues). Thr-455 bears the Phosphothreonine mark. Ser-499 bears the Phosphoserine mark. The PDZ 3 domain occupies 509–590 (NTKMVRFKKG…GEMVTILAQS (82 aa)). Tyr-574 bears the Phosphotyrosine mark. The region spanning 604 to 669 (GDSFFIRSHF…PNKSRAEQMA (66 aa)) is the SH3 domain. A Guanylate kinase-like domain is found at 678–876 (NAGDRADFWR…WFGSLKDTIQ (199 aa)). A phosphoserine mark is found at Ser-702 and Ser-902. The residue at position 905 (Thr-905) is a Phosphothreonine. 2 positions are modified to phosphoserine: Ser-913 and Ser-920. 2 disordered regions span residues 920–1079 (SDFE…KSVL) and 1105–1190 (NARI…DTEL). 2 positions are modified to phosphothreonine: Thr-925 and Thr-933. The segment covering 956–967 (VQHEESIRKPSP) has biased composition (basic and acidic residues). Phosphoserine occurs at positions 966, 978, 986, 1006, 1067, and 1068. Residues 994–1014 (EPPKAKTQNKEESYDFSKSYE) are compositionally biased toward basic and acidic residues. A compositionally biased stretch (acidic residues) spans 1060 to 1072 (EGEEVGESSEEQD). Tyr-1118 carries the phosphotyrosine modification. Thr-1131 bears the Phosphothreonine mark. A phosphoserine mark is found at Ser-1147 and Ser-1159. The segment covering 1166–1175 (YRQQLSEHSK) has biased composition (basic and acidic residues). The tract at residues 1188-1190 (TEL) is interaction with SCRIB.

The protein belongs to the MAGUK family. In terms of assembly, homodimer. Interacts (via PDZ2 domain) with TJP1/ZO1 (via PDZ2 domain). Interacts with OCLN. Interacts with UBN1. Interacts with SAFB in the nucleus. Interacts with SCRIB. Interacts with USP53 (via the C-terminal region). Interacts with claudins, including CLDN1, CLDN2, CLDN3, CLDN5 and CLDN7. Interacts with CLDN18. Interacts (via N-terminus) with CTNNA1. This protein is found in epithelial cell junctions. Isoform A1 is abundant in the heart and brain. Detected in brain and skeletal muscle. It is present almost exclusively in normal tissues. Isoform C1 is expressed at high level in the kidney, pancreas, heart and placenta. Not detected in brain and skeletal muscle. Found in normal as well as in most neoplastic tissues.

It localises to the cell junction. The protein localises to the adherens junction. Its subcellular location is the cell membrane. It is found in the tight junction. The protein resides in the nucleus. Plays a role in tight junctions and adherens junctions. Acts as a positive regulator of RANKL-induced osteoclast differentiation, potentially via mediating downstream transcriptional activity. The polypeptide is Tight junction protein 2 (Homo sapiens (Human)).